A 1339-amino-acid chain; its full sequence is Aldehyde oxidase 1 (1339 aa).

Residues 5–92 (SELLFYVNGR…GAAVTTVEGI (88 aa)) form the 2Fe-2S ferredoxin-type domain. The [2Fe-2S] cluster site is built by C44, C49, C52, and C74. Q113 is a Mo-molybdopterin binding site. Residues C114, C117, C149, and C151 each contribute to the [2Fe-2S] cluster site. C151 lines the Mo-molybdopterin pocket. Positions 236-421 (FGSDRMTWIS…ISVNIPYSRK (186 aa)) constitute an FAD-binding PCMH-type domain. FAD is bound by residues 264 to 271 (VVMGNTSV), A345, S354, H358, D367, and L411. Residues 807 to 808 (AF) and M1048 contribute to the Mo-molybdopterin site. Phosphoserine is present on S1069. Mo-molybdopterin contacts are provided by residues 1089 to 1092 (GSVV), Q1204, and L1269. Residue E1271 is the Proton acceptor; for azaheterocycle hydroxylase activity of the active site.

Belongs to the xanthine dehydrogenase family. Homodimer. The cofactor is [2Fe-2S] cluster. It depends on FAD as a cofactor. Mo-molybdopterin is required as a cofactor. Post-translationally, the N-terminus is blocked. In terms of tissue distribution, expressed at high levels in liver, lung and spleen. Also expressed in kindey, eye, testis, duodenum, esophagus and thymus (at protein level).

It is found in the cytoplasm. The catalysed reaction is an aldehyde + O2 + H2O = a carboxylate + H2O2 + H(+). The enzyme catalyses retinal + O2 + H2O = retinoate + H2O2 + H(+). Functionally, oxidase with broad substrate specificity, oxidizing aromatic azaheterocycles, such as N1-methylnicotinamide, N-methylphthalazinium and phthalazine, as well as aldehydes, such as benzaldehyde, retinal, pyridoxal, and vanillin. Plays a key role in the metabolism of xenobiotics and drugs containing aromatic azaheterocyclic substituents. Is probably involved in the regulation of reactive oxygen species homeostasis. May be a prominent source of superoxide generation via the one-electron reduction of molecular oxygen. May also catalyze nitric oxide (NO) production via the reduction of nitrite to NO with NADH or aldehyde as electron donor. May play a role in adipogenesis. The chain is Aldehyde oxidase 1 from Bos taurus (Bovine).